Consider the following 614-residue polypeptide: Acetylcholinesterase (614 aa).

An N-terminal signal peptide occupies residues 1-31 (MRPPWYPLHTPSLAFPLLFLLLSLLGGGARA). Residues C100 and C127 are joined by a disulfide bond. The active-site Acyl-ester intermediate is the S234. The cysteines at positions 288 and 303 are disulfide-linked. N296 is a glycosylation site (N-linked (GlcNAc...) asparagine). Residue E365 is the Charge relay system of the active site. N-linked (GlcNAc...) asparagine glycosylation occurs at N381. C440 and C560 are oxidised to a cystine. The Charge relay system role is filled by H478. The N-linked (GlcNAc...) asparagine glycan is linked to N495.

It belongs to the type-B carboxylesterase/lipase family. Isoform H generates GPI-anchored dimers; disulfide linked. Isoform T generates multiple structures, ranging from monomers and dimers to collagen-tailed and hydrophobic-tailed forms, in which catalytic tetramers are associated with anchoring proteins that attach them to the basal lamina or to cell membranes. In the collagen-tailed forms, isoform T subunits are associated with a specific collagen, COLQ, which triggers the formation of isoform T tetramers, from monomers and dimers. Interacts with PRIMA1. The interaction with PRIMA1 is required to anchor it to the basal lamina of cells and organize into tetramers. In terms of tissue distribution, predominates in most expressing tissues except erythrocytes where a glycophospholipid-attached form of ACHE predominates.

The protein resides in the synapse. It is found in the secreted. The protein localises to the cell membrane. It catalyses the reaction acetylcholine + H2O = choline + acetate + H(+). Terminates signal transduction at the neuromuscular junction by rapid hydrolysis of the acetylcholine released into the synaptic cleft. The protein is Acetylcholinesterase (Ache) of Mus musculus (Mouse).